Consider the following 880-residue polypeptide: A-adding tRNA nucleotidyltransferase (880 aa).

2 CBS domains span residues 315-373 (MSSP…NLPV) and 377-435 (MHTE…RNAE). ATP is bound at residue 487-490 (GFVR). Residues D500 and D502 each contribute to the Mg(2+) site. Residues 574–575 (RD), N579, 619–628 (DPTRVFRAIR), R632, and R661 contribute to the ATP site.

It belongs to the tRNA nucleotidyltransferase/poly(A) polymerase family. It depends on Mg(2+) as a cofactor.

The catalysed reaction is a tRNA with a 3' CC end + ATP = a tRNA with a 3' CCA end + diphosphate. In terms of biological role, tRNA nucleotidyltransferase involved in the synthesis of the tRNA CCA terminus. Adds the terminal adenosine residue to tRNA. The chain is A-adding tRNA nucleotidyltransferase from Geobacter sulfurreducens (strain ATCC 51573 / DSM 12127 / PCA).